The following is a 155-amino-acid chain: MSDLASLDTSQHPYLPQSASLLFDAKAKANLSFEQIAQHIGRNEVATAAIFYGQAKASKEDIIKLAELLRLPATALEMQMGGFPDRGRSVEMPPREPLIYRLYEIVQNYGYAYKAILNEKFGDGIMSAISFSTNVEKETDEDGNNWAIITMRGKW.

Catalysis depends on residues Arg101, Glu104, and Ser127.

Belongs to the cyanase family.

The catalysed reaction is cyanate + hydrogencarbonate + 3 H(+) = NH4(+) + 2 CO2. Catalyzes the reaction of cyanate with bicarbonate to produce ammonia and carbon dioxide. In Coccidioides posadasii (strain C735) (Valley fever fungus), this protein is Cyanate hydratase.